A 56-amino-acid polypeptide reads, in one-letter code: Arcadin-3 (56 aa).

It is found in the cytoplasm. It localises to the cytoskeleton. Its function is as follows. Part of an actin-like archaeal cytoskeleton. This chain is Arcadin-3, found in Pyrobaculum calidifontis (strain DSM 21063 / JCM 11548 / VA1).